A 336-amino-acid chain; its full sequence is Dihydroorotate dehydrogenase (quinone) (336 aa).

FMN is bound by residues 62-66 (AGLDK) and Thr86. Position 66 (Lys66) interacts with substrate. Substrate is bound at residue 111-115 (NRMGF). FMN is bound by residues Asn139 and Asn172. Asn172 contributes to the substrate binding site. Ser175 (nucleophile) is an active-site residue. Asn177 serves as a coordination point for substrate. 2 residues coordinate FMN: Lys217 and Thr245. Residue 246–247 (NT) coordinates substrate. Residues Gly268, Gly297, and 318 to 319 (YS) each bind FMN.

This sequence belongs to the dihydroorotate dehydrogenase family. Type 2 subfamily. Monomer. Requires FMN as cofactor.

Its subcellular location is the cell membrane. The catalysed reaction is (S)-dihydroorotate + a quinone = orotate + a quinol. It functions in the pathway pyrimidine metabolism; UMP biosynthesis via de novo pathway; orotate from (S)-dihydroorotate (quinone route): step 1/1. In terms of biological role, catalyzes the conversion of dihydroorotate to orotate with quinone as electron acceptor. The sequence is that of Dihydroorotate dehydrogenase (quinone) from Sodalis glossinidius (strain morsitans).